Consider the following 632-residue polypeptide: Thioredoxin domain-containing protein C959.05c (632 aa).

A signal peptide spans 1–22; the sequence is MKLFLYHFTFIVYYFIISFSYA. Residues asparagine 35, asparagine 41, and asparagine 140 are each glycosylated (N-linked (GlcNAc...) asparagine). Residues 153-284 enclose the Thioredoxin domain; the sequence is SDSSSTDPAF…LLSYSNQVAS (132 aa). Cysteine 209 and cysteine 212 are joined by a disulfide. A glycan (N-linked (GlcNAc...) asparagine) is linked at asparagine 557. The helical transmembrane segment at 583 to 603 threads the bilayer; the sequence is LIVFNLLIALLILSILTIISA.

This sequence belongs to the protein disulfide isomerase family.

It localises to the endoplasmic reticulum membrane. The catalysed reaction is Catalyzes the rearrangement of -S-S- bonds in proteins.. Its function is as follows. Acts as a membrane-bound chaperone in endoplasmic reticulum quality control. Probably facilitates presentation of substrate to membrane-bound components of the degradation machinery. This Schizosaccharomyces pombe (strain 972 / ATCC 24843) (Fission yeast) protein is Thioredoxin domain-containing protein C959.05c.